A 217-amino-acid polypeptide reads, in one-letter code: uncharacterized protein (217 aa).

The next 6 membrane-spanning stretches (helical) occupy residues 13-35 (IWLTSTLLAMKYLTPLNLAIALL), 50-68 (FSLVFPILLSALAAYILYL), 75-94 (FLLAYSILFIALKFVNEWRI), 109-131 (MMALAYGAGLMEILAPLTLLFSL), 152-174 (YLAIIPLALIFYILSHPVLAAAV), and 194-216 (GFSLLFLNLLFVVGFLALDFAGL).

It is found in the cell membrane. This is an uncharacterized protein from Archaeoglobus fulgidus (strain ATCC 49558 / DSM 4304 / JCM 9628 / NBRC 100126 / VC-16).